The following is a 307-amino-acid chain: Small ribosomal subunit biogenesis GTPase RsgA (307 aa).

A disordered region spans residues 1–21 (MPSEHPFSDGISTPNPKETMN). Polar residues predominate over residues 10 to 21 (GISTPNPKETMN). The 158-residue stretch at 85–242 (RQDAWKTKLI…LIDSPGLQEF (158 aa)) folds into the CP-type G domain. Residues 135–138 (NKAD) and 184–192 (GQSGMGKST) each bind GTP. Zn(2+)-binding residues include Cys266, Cys271, His273, and Cys279.

Belongs to the TRAFAC class YlqF/YawG GTPase family. RsgA subfamily. Monomer. Associates with 30S ribosomal subunit, binds 16S rRNA. The cofactor is Zn(2+).

It is found in the cytoplasm. In terms of biological role, one of several proteins that assist in the late maturation steps of the functional core of the 30S ribosomal subunit. Helps release RbfA from mature subunits. May play a role in the assembly of ribosomal proteins into the subunit. Circularly permuted GTPase that catalyzes slow GTP hydrolysis, GTPase activity is stimulated by the 30S ribosomal subunit. The protein is Small ribosomal subunit biogenesis GTPase RsgA of Neisseria gonorrhoeae (strain ATCC 700825 / FA 1090).